The following is a 761-amino-acid chain: Subtilisin-like protease SBT3 (761 aa).

Positions 1–22 are cleaved as a signal peptide; it reads MELLHLLLFSWALSAHLFLALA. Residues 23–112 constitute a propeptide that is removed on maturation; sequence QRSTYIVHLD…AYKDRTVEPH (90 aa). Residues 26-110 enclose the Inhibitor I9 domain; that stretch reads TYIVHLDKSL…ISAYKDRTVE (85 aa). The Peptidase S8 domain maps to 116–606; it reads TSDFLKLNPS…AGHVDPNRAL (491 aa). The active-site Charge relay system is the aspartate 144. A disulfide bridge connects residues cysteine 170 and cysteine 181. N-linked (GlcNAc...) (complex) asparagine; alternate glycans are attached at residues asparagine 177 and asparagine 203. Asparagine 177 and asparagine 203 each carry an N-linked (GlcNAc...) (paucimannose) asparagine; alternate glycan. Residue histidine 215 is the Charge relay system of the active site. Asparagine 376 carries N-linked (GlcNAc...) (paucimannose) asparagine; partial glycosylation. Cysteine 382 and cysteine 401 are joined by a disulfide. Serine 538 functions as the Charge relay system in the catalytic mechanism. Positions 574 to 598 are disordered; the sequence is LDNTRKPIKDSDNNKAATPLDMGAG. Residues 575–586 show a composition bias toward basic and acidic residues; it reads DNTRKPIKDSDN. A disulfide bridge links cysteine 624 with cysteine 645. Residues asparagine 697 and asparagine 745 are each glycosylated (N-linked (GlcNAc...) (complex) asparagine; alternate). N-linked (GlcNAc...) (paucimannose) asparagine; alternate glycosylation is found at asparagine 697 and asparagine 745. The segment at 756–761 is necessary for prodomain cleavage and secretion; it reads PIIEVW.

This sequence belongs to the peptidase S8 family. Homodimer. Post-translationally, propeptide is internally cleaved at Asn-38 and Asp-52 in a pH-dependent manner leading to the dissociation of the propeptide from the catalytic domain and resulting in the release of the active subtilase. Cleavage occurs at pH 5.7 and to a stronger extent at pH 5.2. In terms of tissue distribution, expressed in flowers, cotyledons and leaves with the highest expression in roots.

The protein resides in the secreted. Its activity is regulated as follows. Inhibited by 1 mM 4-(2-aminoethyl)-benzenesulfonyl fluoride (AEBSF), a general inhibitor of serine proteinases, but not by the more selective serine protease inhibitors N-alpha-tosyl-L-lysinyl-chloromethylketone (TLCK), N-tosyl-L-phenylalaninyl-chloromethylketone (TPCK), leupeptin, aprotinin or benzamidine. Its proteolytic activity is autoinhibited by the non-covalent binding of the propeptide to the catalytic domain. No effect on activity by the addition of CaCl(2) or calcium chelators. Functionally, serine protease. Has preference for Gln in the P1 position and Lys in the P2 position of oligopeptide substrates. Active also with His in the P1 position. Involved in resistance against insects partly by regulating expression of systemic wound response genes and possibly by its post-ingestive activity in the insect gut. Apart from the role in defense, may be involved in regulation of pectin methylesterases (PMEs) activity and pectin methylesterification of the cell wall. This chain is Subtilisin-like protease SBT3, found in Solanum lycopersicum (Tomato).